Consider the following 59-residue polypeptide: Metallothionein-1B (59 aa).

The segment at 1–29 is beta; it reads MPGPCCNDKCVCQEGGCKAGCQCTSCRCS. A divalent metal cation contacts are provided by Cys5, Cys6, Cys10, Cys17, Cys21, Cys23, Cys26, Cys28, Cys31, Cys34, Cys38, Cys40, Cys46, Cys50, Cys54, Cys56, and Cys57. Residues 30 to 59 are alpha; sequence PCQKCTSGCKCATKEECSKTCTKPCSCCPK.

It belongs to the metallothionein superfamily. Type 3 family.

Binds six divalent metal ions. Known to bind copper and cadmium. This chain is Metallothionein-1B, found in Callinectes sapidus (Blue crab).